The primary structure comprises 603 residues: Glutathione-regulated potassium-efflux system protein KefB (603 aa).

The next 13 membrane-spanning stretches (helical) occupy residues 4–24 (SDFL…VPLA), 29–49 (IGAV…GLGF), 55–75 (EILH…GLEL), 87–107 (IFGV…GLLM), 115–135 (AAVV…LQLM), 152–172 (VLLF…LLAG), 177–197 (HFDW…LIGG), 207–227 (FIAA…LVLG), 230–250 (LFMD…GVLL), 268–288 (GLLL…GVLY), 291–311 (LLWV…VLYL), 324–344 (MQFA…FSTA), and 355–375 (MALL…PLLM). Residues 402 to 521 (KPQVIVVGFG…AGVTQFSRET (120 aa)) enclose the RCK N-terminal domain.

Belongs to the monovalent cation:proton antiporter 2 (CPA2) transporter (TC 2.A.37) family. KefB subfamily. In terms of assembly, interacts with the regulatory subunit KefG.

It is found in the cell inner membrane. In terms of biological role, pore-forming subunit of a potassium efflux system that confers protection against electrophiles. Catalyzes K(+)/H(+) antiport. The sequence is that of Glutathione-regulated potassium-efflux system protein KefB from Shigella boydii serotype 4 (strain Sb227).